The primary structure comprises 458 residues: Protein U54 (458 aa).

N-linked (GlcNAc...) asparagine; by host glycosylation is found at asparagine 76, asparagine 102, asparagine 281, asparagine 321, asparagine 346, asparagine 434, and asparagine 451.

It belongs to the herpesviridae UL82 family.

The sequence is that of Protein U54 (U54) from Homo sapiens (Human).